The following is a 343-amino-acid chain: Dihydroorotase (343 aa).

Residues His14 and His16 each coordinate Zn(2+). Substrate-binding positions include 16–18 (HVR) and Asn42. 3 residues coordinate Zn(2+): Lys98, His135, and His173. Lys98 carries the N6-carboxylysine modification. His135 contacts substrate. A substrate-binding site is contributed by Leu219. Position 247 (Asp247) interacts with Zn(2+). Asp247 is an active-site residue. Residues His251 and Ala263 each coordinate substrate.

This sequence belongs to the metallo-dependent hydrolases superfamily. DHOase family. Class II DHOase subfamily. As to quaternary structure, homodimer. Zn(2+) serves as cofactor.

It carries out the reaction (S)-dihydroorotate + H2O = N-carbamoyl-L-aspartate + H(+). It participates in pyrimidine metabolism; UMP biosynthesis via de novo pathway; (S)-dihydroorotate from bicarbonate: step 3/3. Catalyzes the reversible cyclization of carbamoyl aspartate to dihydroorotate. This is Dihydroorotase from Marinobacter nauticus (strain ATCC 700491 / DSM 11845 / VT8) (Marinobacter aquaeolei).